The following is a 997-amino-acid chain: Disease resistance protein RML1A (997 aa).

A TIR domain is found at 12-176 (WRYRVFTSFH…KIARDVSEKL (165 aa)). Glu87 is a catalytic residue. An NB-ARC domain is found at 191–447 (EAHLRKIQSL…HIAIFFNYED (257 aa)). LRR repeat units lie at residues 194–218 (LRKI…GPAG), 534–557 (TSGI…RFLS), 600–623 (AENL…TQLL), 624–647 (TKLK…SNAT), 649–670 (LEML…IKNL), 671–693 (HKLD…NINL), 694–714 (ASLE…PAFS), 715–737 (TKIK…ITHC), 758–781 (PSSL…CIKD), and 783–808 (QRLD…SLRL).

The catalysed reaction is NAD(+) + H2O = ADP-D-ribose + nicotinamide + H(+). Functionally, TIR-NB-LRR receptor-like protein that confers resistance to the pathogen Leptosphaeria maculans (blackleg disease). The polypeptide is Disease resistance protein RML1A (Arabidopsis thaliana (Mouse-ear cress)).